Reading from the N-terminus, the 508-residue chain is Light-independent protochlorophyllide reductase subunit B (508 aa).

Residue aspartate 36 participates in [4Fe-4S] cluster binding. The active-site Proton donor is aspartate 294. 429–430 (GM) serves as a coordination point for substrate.

The protein belongs to the ChlB/BchB/BchZ family. In terms of assembly, protochlorophyllide reductase is composed of three subunits; ChlL, ChlN and ChlB. Forms a heterotetramer of two ChlB and two ChlN subunits. Requires [4Fe-4S] cluster as cofactor.

The catalysed reaction is chlorophyllide a + oxidized 2[4Fe-4S]-[ferredoxin] + 2 ADP + 2 phosphate = protochlorophyllide a + reduced 2[4Fe-4S]-[ferredoxin] + 2 ATP + 2 H2O. The protein operates within porphyrin-containing compound metabolism; chlorophyll biosynthesis (light-independent). Its function is as follows. Component of the dark-operative protochlorophyllide reductase (DPOR) that uses Mg-ATP and reduced ferredoxin to reduce ring D of protochlorophyllide (Pchlide) to form chlorophyllide a (Chlide). This reaction is light-independent. The NB-protein (ChlN-ChlB) is the catalytic component of the complex. This Rippkaea orientalis (strain PCC 8801 / RF-1) (Cyanothece sp. (strain PCC 8801)) protein is Light-independent protochlorophyllide reductase subunit B.